The following is a 346-amino-acid chain: MSEAYKNAGVDIEAGYEAVKRMKTHVERTKRAGVMGALGGFGGMFDLSELPYKKPVLVSGTDGVGTKLKLAFLMDKHDTIGVDAVAMCVNDVLAQGAEPLFFLDYLAVGKADPVKIESIVKGVADGCEQSGSALVGGETAEMPGLYTEEEYDIAGFSVGVVEKDEIVTGNSIKEGHLLIGLSSSGIHSNGYSLVRKVLLEDAGLDLHQTYEPFKRPLGEELLEPTKIYVKPVLKQVKAGKVDGMAHVTGGGFIENLPRMLPEGLGVEIDNGSWPVPPIFSFIQEKGQLKAEEMFNVFNMGIGFVLAVKEDDLVDVIRELEQDGEKAFLIGRVQKGEGVTFGGGSLS.

The protein belongs to the AIR synthase family.

It is found in the cytoplasm. The catalysed reaction is 2-formamido-N(1)-(5-O-phospho-beta-D-ribosyl)acetamidine + ATP = 5-amino-1-(5-phospho-beta-D-ribosyl)imidazole + ADP + phosphate + H(+). The protein operates within purine metabolism; IMP biosynthesis via de novo pathway; 5-amino-1-(5-phospho-D-ribosyl)imidazole from N(2)-formyl-N(1)-(5-phospho-D-ribosyl)glycinamide: step 2/2. This Bacillus pumilus (strain SAFR-032) protein is Phosphoribosylformylglycinamidine cyclo-ligase.